Consider the following 184-residue polypeptide: Peptidoglycan-recognition protein SC2 (184 aa).

The first 20 residues, 1–20 (MANKALILLAVLFCAQAVLG), serve as a signal peptide directing secretion. The N-acetylmuramoyl-L-alanine amidase domain maps to 45 to 169 (SYAVIHHTAG…RQVGSTECPG (125 aa)). Position 50 (H50) interacts with Zn(2+). Cysteines 57 and 63 form a disulfide. The Zn(2+) site is built by H159 and C167.

Belongs to the N-acetylmuramoyl-L-alanine amidase 2 family. The cofactor is Zn(2+).

Its subcellular location is the secreted. The catalysed reaction is Hydrolyzes the link between N-acetylmuramoyl residues and L-amino acid residues in certain cell-wall glycopeptides.. Functionally, N-acetylmuramyl-L-alanine amidase involved in innate immunity by degrading bacterial peptidoglycans (PGN). Probably plays a scavenger role by digesting biologically active PGN into biologically inactive fragments. Has no direct bacteriolytic activity. This Drosophila simulans (Fruit fly) protein is Peptidoglycan-recognition protein SC2 (PGRP-SC2).